Reading from the N-terminus, the 93-residue chain is Small ribosomal subunit protein uS19 (93 aa).

The interval 72–93 is disordered; it reads GEFSPTRTYRGHNKKDKKMQKK. Basic residues predominate over residues 80 to 93; it reads YRGHNKKDKKMQKK.

The protein belongs to the universal ribosomal protein uS19 family.

Protein S19 forms a complex with S13 that binds strongly to the 16S ribosomal RNA. The protein is Small ribosomal subunit protein uS19 of Aster yellows witches'-broom phytoplasma (strain AYWB).